Here is a 388-residue protein sequence, read N- to C-terminus: Succinyl-diaminopimelate desuccinylase (388 aa).

H72 provides a ligand contact to Zn(2+). D74 is a catalytic residue. D105 provides a ligand contact to Zn(2+). E139 serves as the catalytic Proton acceptor. E140, E168, and H353 together coordinate Zn(2+).

This sequence belongs to the peptidase M20A family. DapE subfamily. As to quaternary structure, homodimer. The cofactor is Zn(2+). Co(2+) serves as cofactor.

It catalyses the reaction N-succinyl-(2S,6S)-2,6-diaminopimelate + H2O = (2S,6S)-2,6-diaminopimelate + succinate. It functions in the pathway amino-acid biosynthesis; L-lysine biosynthesis via DAP pathway; LL-2,6-diaminopimelate from (S)-tetrahydrodipicolinate (succinylase route): step 3/3. Catalyzes the hydrolysis of N-succinyl-L,L-diaminopimelic acid (SDAP), forming succinate and LL-2,6-diaminopimelate (DAP), an intermediate involved in the bacterial biosynthesis of lysine and meso-diaminopimelic acid, an essential component of bacterial cell walls. This chain is Succinyl-diaminopimelate desuccinylase, found in Orientia tsutsugamushi (strain Boryong) (Rickettsia tsutsugamushi).